We begin with the raw amino-acid sequence, 254 residues long: 2-dehydro-3-deoxy-D-gluconate 5-dehydrogenase (254 aa).

The active-site Proton acceptor is tyrosine 159.

This sequence belongs to the short-chain dehydrogenases/reductases (SDR) family.

The catalysed reaction is 2-dehydro-3-deoxy-D-gluconate + NAD(+) = 3-deoxy-D-glycero-2,5-hexodiulosonate + NADH + H(+). Functionally, involved in the degradation of 3,6-anhydro-L-galactose, which is the major monomeric sugar of red macroalgae. Catalyzes the fourth step of the pathway, the reduction of 3-deoxy-D-glycero-2,5-hexodiulosonate (L-DDGal) to 2-dehydro-3-deoxy-D-gluconate (KDG). The chain is 2-dehydro-3-deoxy-D-gluconate 5-dehydrogenase from Pseudoalteromonas atlantica (strain T6c / ATCC BAA-1087).